We begin with the raw amino-acid sequence, 177 residues long: Protein Flattop (177 aa).

The disordered stretch occupies residues Ile113–Ser177. Positions Gly115–Lys124 are enriched in basic and acidic residues. The segment covering Thr132–Pro163 has biased composition (polar residues).

The protein belongs to the Flattop family. Microtubule inner protein component of sperm flagellar doublet microtubules. Interacts with DLG3. As to expression, expressed in airway epithelial cells.

The protein resides in the cytoplasm. It is found in the cytoskeleton. It localises to the cilium basal body. The protein localises to the cell projection. Its subcellular location is the cilium. The protein resides in the apical cell membrane. It is found in the cilium axoneme. It localises to the flagellum axoneme. Microtubule inner protein (MIP) part of the dynein-decorated doublet microtubules (DMTs) in cilia axoneme. Acts as a regulator of cilium basal body docking and positioning in mono- and multiciliated cells. Regulates basal body docking and cilia formation in multiciliated lung cells. Regulates kinocilium positioning and stereocilia bundle morphogenesis in the inner ear. This chain is Protein Flattop, found in Homo sapiens (Human).